We begin with the raw amino-acid sequence, 558 residues long: Potassium-transporting ATPase potassium-binding subunit (558 aa).

Helical transmembrane passes span 1–21, 59–79, 85–105, 130–150, 179–199, 245–265, 279–299, 374–394, 416–436, 484–504, and 527–547; these read MDTL…VLIH, PAYL…VYGL, FLPY…NTAV, GLAV…IALV, LSLV…FAGF, PTAW…FSLP, TAIV…LTIF, GLYG…LLVG, ILVT…IPAV, ALGV…LALA, and FVGL…FPVL.

Belongs to the KdpA family. As to quaternary structure, the system is composed of three essential subunits: KdpA, KdpB and KdpC.

Its subcellular location is the cell membrane. Its function is as follows. Part of the high-affinity ATP-driven potassium transport (or Kdp) system, which catalyzes the hydrolysis of ATP coupled with the electrogenic transport of potassium into the cytoplasm. This subunit binds the extracellular potassium ions and delivers the ions to the membrane domain of KdpB through an intramembrane tunnel. The chain is Potassium-transporting ATPase potassium-binding subunit from Clavibacter michiganensis subsp. michiganensis (strain NCPPB 382).